The following is a 230-amino-acid chain: MDNKIIVALDYETEAEALNFVDQVDPSLCRLKVGKEMFTTLGTHFVKQLQDRKFDVFLDLKYHDIPNTVARAVRSAADLGVWMVDLHACGGLRMMETAKQILEPYGKDAPLLIGVTVLTSMEDLDLLQIGINASPMEQVIRLAHLCQRAGLDGVVCSPQEVEVLRTHCGKDFKLVTPGIRPEGSDFGDQRRVMTPKQAIEIGSDYLVIGRPITQAADPLAVLKSINQSIA.

Residues aspartate 10, lysine 32, 59–68, threonine 119, arginine 180, glutamine 189, glycine 209, and arginine 210 contribute to the substrate site; that span reads DLKYHDIPNT. Residue lysine 61 is the Proton donor of the active site.

Belongs to the OMP decarboxylase family. Type 1 subfamily. Homodimer.

The catalysed reaction is orotidine 5'-phosphate + H(+) = UMP + CO2. It functions in the pathway pyrimidine metabolism; UMP biosynthesis via de novo pathway; UMP from orotate: step 2/2. Functionally, catalyzes the decarboxylation of orotidine 5'-monophosphate (OMP) to uridine 5'-monophosphate (UMP). The polypeptide is Orotidine 5'-phosphate decarboxylase (Glaesserella parasuis serovar 5 (strain SH0165) (Haemophilus parasuis)).